Reading from the N-terminus, the 363-residue chain is AA9 family lytic polysaccharide monooxygenase I (363 aa).

A signal peptide spans 1–19 (MSLFKFAAFVLGTAGSVAG). Residues His20 and His105 each coordinate Cu(2+). Cystine bridges form between Cys75–Cys197 and Cys116–Cys120. O2 is bound by residues His183 and Gln192. Tyr194 contributes to the Cu(2+) binding site. A compositionally biased stretch (polar residues) spans 248–257 (GSDSNTATSG). Disordered regions lie at residues 248–270 (GSDS…PTTT) and 298–363 (SVSY…RTQS). Low complexity predominate over residues 258–270 (ASPPSTNFSPTTT). A compositionally biased stretch (polar residues) spans 298–307 (SVSYSQTPWP). Positions 308 to 329 (SSTATEATSASSSAGGSNNGHT) are enriched in low complexity. Basic residues predominate over residues 342-354 (TGKKRSRLNRRRM).

It belongs to the polysaccharide monooxygenase AA9 family. Requires Cu(2+) as cofactor.

Its subcellular location is the secreted. It catalyses the reaction [(1-&gt;4)-beta-D-glucosyl]n+m + reduced acceptor + O2 = 4-dehydro-beta-D-glucosyl-[(1-&gt;4)-beta-D-glucosyl]n-1 + [(1-&gt;4)-beta-D-glucosyl]m + acceptor + H2O.. In terms of biological role, lytic polysaccharide monooxygenase (LPMO) that depolymerizes crystalline and amorphous polysaccharides via the oxidation of scissile alpha- or beta-(1-4)-glycosidic bonds, yielding C1 or C4 oxidation products. Catalysis by LPMOs requires the reduction of the active-site copper from Cu(II) to Cu(I) by a reducing agent and H(2)O(2) or O(2) as a cosubstrate. The chain is AA9 family lytic polysaccharide monooxygenase I from Emericella nidulans (strain FGSC A4 / ATCC 38163 / CBS 112.46 / NRRL 194 / M139) (Aspergillus nidulans).